The sequence spans 532 residues: Carboxypeptidase Y (532 aa).

The N-terminal stretch at 1–20 (MKAFTSLLCGLGLSTTLAKA) is a signal peptide. The propeptide at 21–111 (ISLQRPLGLD…AIENYQLRVN (91 aa)) is mediates translocation across the endoplasmic reticulum, renders the enzyme inactive during transit, and targets the molecule to the vacuole. The short motif at 24 to 27 (QRPL) is the Vacuolar targeting signal element. N-linked (GlcNAc...) (high mannose) asparagine glycosylation is found at N124 and N198. 5 cysteine pairs are disulfide-bonded: C167–C409, C304–C318, C328–C351, C335–C344, and C373–C379. S257 is a catalytic residue. The N-linked (GlcNAc...) (high mannose) asparagine glycan is linked to N279. Residue D449 is part of the active site. C452 contributes to the substrate binding site. An N-linked (GlcNAc...) (high mannose) asparagine glycan is attached at N479. Residue H508 is part of the active site. Residue M509 coordinates substrate.

This sequence belongs to the peptidase S10 family. Post-translationally, enters the endoplasmic reticulum as an inactive zymogen and is modified by four N-linked core oligosaccharides, giving rise to a precursor known as P1 (67 kDa). As P1 transits through the Golgi, extension of its core oligosaccharides leads to the Golgi-modified P2 precursor (69 kDa). P2 is sorted away from secretory proteins at or beyond a late Golgi compartment and is subsequently delivered to the vacuole via a prevacuolar endosome-like compartment. Upon arrival in the vacuole, the N-terminal prosegment of P2 is cleaved by vacuolar proteases to yield the enzymatically active mature vacuolar form of CPY (61 kDa). The four high mannose core N-glycans found in mature CPY are Man(11-15)GlcNAc(2) at Asn-124, Man(8-12)GlcNAc(2) at Asn-198, Man(9-14)GlcNAc(2) at Asn-279 and phosphorylated Man(12-17)GlcNAc(2) as well as Man(11-16)GlcNAc(2) at Asn-479.

Its subcellular location is the vacuole lumen. It carries out the reaction Release of a C-terminal amino acid with broad specificity.. Its activity is regulated as follows. Inhibited by ZPCK. In terms of biological role, vacuolar serine-type carboxypeptidase involved in degradation of small peptides. Digests preferentially peptides containing an aliphatic or hydrophobic residue in P1' position, as well as methionine, leucine or phenylalanine in P1 position of ester substrate. Also plays a role in breakdown of the autophagic body and the autophagosome-dependent protein synthesis. Plays a key role in phytochelatin (PC) synthesis from glutathione (GSH) by cleaving the Gly from GSH and form the PC-peptides of the structure (gamma-Glu-Cys)2-Gly. Also involved in resistance to xenobiotics via the degradation of glutathione-S-conjugates. In Saccharomyces cerevisiae (strain ATCC 204508 / S288c) (Baker's yeast), this protein is Carboxypeptidase Y.